The primary structure comprises 637 residues: Delta(14)-sterol reductase LBR (637 aa).

The region spanning 1–62 is the Tudor domain; sequence MPNRKYADGE…DIRLQSSFKQ (62 aa). The Nuclear portion of the chain corresponds to 1–205; sequence MPNRKYADGE…KTKELEFGGR (205 aa). Low complexity predominate over residues 57 to 73; the sequence is QSSFKQRKSQSSSSSPS. A disordered region spans residues 57-151; that stretch reads QSSFKQRKSQ…SKLLEQQKLK (95 aa). A compositionally biased stretch (basic residues) spans 74–97; it reads RRSRSRSRSRSPGRPAKGRRRSSS. Phosphoserine; by PKA is present on residues Ser-95 and Ser-96. Basic and acidic residues-rich tracts occupy residues 98 to 110 and 124 to 151; these read HSRE…KKII and NTRR…QKLK. 8 helical membrane-spanning segments follow: residues 206–226, 250–270, 288–309, 317–338, 378–399, 403–425, 466–486, and 554–574; these read FGTF…VLMC, VFGV…LPIG, INGF…YFQF, HFVQ…YLYI, YFCE…MLLA, IHNQ…LYVV, FYLV…ITIL, and PCGF…CLLV.

The protein belongs to the ERG4/ERG24 family. Interacts with DNA. Interaction with DNA is sequence independent with higher affinity for supercoiled and relaxed circular DNA than linear DNA.

Its subcellular location is the nucleus inner membrane. It is found in the nucleus. It localises to the cytoplasm. The protein resides in the endoplasmic reticulum membrane. The catalysed reaction is 5alpha-cholest-8,14-dien-3beta-ol + NADPH + H(+) = 5alpha-cholest-8-en-3beta-ol + NADP(+). The enzyme catalyses 4,4-dimethyl-5alpha-cholesta-8,24-dien-3beta-ol + NADP(+) = 4,4-dimethyl-5alpha-cholesta-8,14,24-trien-3beta-ol + NADPH + H(+). It catalyses the reaction 4,4-dimethyl-8,14-cholestadien-3beta-ol + NADPH + H(+) = 4,4-dimethyl-5alpha-cholest-8-en-3beta-ol + NADP(+). It functions in the pathway steroid biosynthesis; cholesterol biosynthesis. Functionally, catalyzes the reduction of the C14-unsaturated bond of lanosterol, as part of the metabolic pathway leading to cholesterol biosynthesis. Anchors the lamina and the heterochromatin to the inner nuclear membrane. This is Delta(14)-sterol reductase LBR (LBR) from Gallus gallus (Chicken).